Reading from the N-terminus, the 577-residue chain is MTELAGASSSCCHRPAGRGAMQSVLHHFQRLRGREGGSHFINTSSPRGEAKMSITSDEVNFLVYRYLQESGFSHSAFTFGIESHISQSNINGTLVPPAALISILQKGLQYVEAEISINEDGTVFDGRPIESLSLIDAVMPDVVQTRQQAFREKLAQQQASAAAAAAAATAAATAATTTSAGVSHQNPSKNREATVNGEENRAHSVNNHAKPMEIDGEVEIPSSKATVLRGHESEVFICAWNPVSDLLASGSGDSTARIWNLNENSNGGSTQLVLRHCIREGGHDVPSNKDVTSLDWNTNGTLLATGSYDGFARIWTEDGNLASTLGQHKGPIFALKWNRKGNYILSAGVDKTTIIWDAHTGEAKQQFPFHSAPALDVDWQNNTTFASCSTDMCIHVCRLGCDRPVKTFQGHTNEVNAIKWDPSGMLLASCSDDMTLKIWSMKQEVCIHDLQAHNKEIYTIKWSPTGPATSNPNSNIMLASASFDSTVRLWDIERGVCTHTLTKHQEPVYSVAFSPDGKYLASGSFDKCVHIWNTQSGNLVHSYRGTGGIFEVCWNARGDKVGASASDGSVCVLDLRK.

The LisH domain occupies 55–87 (TSDEVNFLVYRYLQESGFSHSAFTFGIESHISQ). Residues 92-137 (GTLVPPAALISILQKGLQYVEAEISINEDGTVFDGRPIESLSLIDA) form the F-box-like domain. N6-acetyllysine is present on lysine 153. The interval 177 to 202 (TTSAGVSHQNPSKNREATVNGEENRA) is disordered. Serine 183 carries the post-translational modification Phosphoserine. WD repeat units lie at residues 230–269 (GHESEVFICAWNPVSDLLASGSGDSTARIWNLNENSNGGS), 286–325 (PSNKDVTSLDWNTNGTLLATGSYDGFARIWTEDGNLASTL), 327–366 (QHKGPIFALKWNRKGNYILSAGVDKTTIIWDAHTGEAKQQ), 369–409 (FHSA…KTFQ), 410–449 (GHTNEVNAIKWDPSGMLLASCSDDMTLKIWSMKQEVCIHD), 452–500 (AHNK…CTHT), 503–542 (KHQEPVYSVAFSPDGKYLASGSFDKCVHIWNTQSGNLVHS), and 544–576 (RGTGGIFEVCWNARGDKVGASASDGSVCVLDLR). Lysine 340 is covalently cross-linked (Glycyl lysine isopeptide (Lys-Gly) (interchain with G-Cter in SUMO2)).

The protein belongs to the WD repeat EBI family. In terms of assembly, homotetramer; dimer of dimers. Component of the N-Cor repressor complex, at least composed of NCOR1, NCOR2, HDAC3, TBL1X, TBL1R, CORO2A and GPS2. Interacts with GPS2 (when sumoylated); leading to protect GPS2 against degradation by the proteasome. Component of a E3 ubiquitin ligase complex containing UBE2D1, SIAH1, CACYBP/SIP, SKP1, APC and TBL1X. Probably part of other corepressor complexes, that do not contain NCOR1 and NCOR2. Interacts with histones H2B, H3a and H4. Interacts with MECP2; recruits TBL1X to the heterochromatin foci. Interacts with USP44. Ubiquitous.

The protein resides in the nucleus. Functionally, F-box-like protein involved in the recruitment of the ubiquitin/19S proteasome complex to nuclear receptor-regulated transcription units. Plays an essential role in transcription activation mediated by nuclear receptors. Probably acts as integral component of corepressor complexes that mediates the recruitment of the 19S proteasome complex, leading to the subsequent proteasomal degradation of transcription repressor complexes, thereby allowing cofactor exchange. The sequence is that of F-box-like/WD repeat-containing protein TBL1X (TBL1X) from Homo sapiens (Human).